A 586-amino-acid polypeptide reads, in one-letter code: Glutathione S-transferase C-terminal domain-containing protein homolog (586 aa).

Residues L121 to L276 form the GST C-terminal domain.

Belongs to the GSTCD family.

The chain is Glutathione S-transferase C-terminal domain-containing protein homolog from Drosophila pseudoobscura pseudoobscura (Fruit fly).